A 171-amino-acid polypeptide reads, in one-letter code: AAF/I fimbrial subunit (171 aa).

Positions 1–28 (MKTLKNMRRKNLCITLGLVSLLSRGANA) are cleaved as a signal peptide.

It is found in the fimbrium. The chain is AAF/I fimbrial subunit (aggA) from Escherichia coli.